The primary structure comprises 324 residues: NAD(P)H-dependent D-xylose reductase I,II (324 aa).

Catalysis depends on Y54, which acts as the Proton donor. H116 is a substrate binding site. Residues 171–172 (SN), 220–229 (SSFGPQSFLE), and 276–286 (KSNNPERLAQN) contribute to the NAD(+) site.

The protein belongs to the aldo/keto reductase family.

It carries out the reaction xylitol + NAD(+) = D-xylose + NADH + H(+). It catalyses the reaction xylitol + NADP(+) = D-xylose + NADPH + H(+). It participates in carbohydrate metabolism; D-xylose degradation. In terms of biological role, reduces D-xylose into xylitol. Has a preference for NADPH, but can also utilize NADH as cosubstrate. In Candida tropicalis (Yeast), this protein is NAD(P)H-dependent D-xylose reductase I,II (xyrA).